We begin with the raw amino-acid sequence, 120 residues long: Large ribosomal subunit protein eL8 (120 aa).

Belongs to the eukaryotic ribosomal protein eL8 family. In terms of assembly, part of the 50S ribosomal subunit. Probably part of the RNase P complex.

It localises to the cytoplasm. In terms of biological role, multifunctional RNA-binding protein that recognizes the K-turn motif in ribosomal RNA, the RNA component of RNase P, box H/ACA, box C/D and box C'/D' sRNAs. In Halobacterium salinarum (strain ATCC 29341 / DSM 671 / R1), this protein is Large ribosomal subunit protein eL8.